Reading from the N-terminus, the 181-residue chain is MSFQEVWEKEPMKKPRIQKVTVNFGVGEAGDRLTIGAKVIEELTGQSPVRTLAKQTNPAFGIRKKLPIGLKVTLRGKNAEEFLGNAFTAFKTSGKVLYASSFDQVGNFSFGVPEHIDFPGQKYDPSIGIYGMDVCVTFEKSGYRVKSRKVKRSHIPKKHLVTKDEAIEYIQTKFDTEVVRE.

Belongs to the universal ribosomal protein uL5 family. In terms of assembly, part of the 50S ribosomal subunit; contacts the 5S rRNA and probably tRNA. Forms a bridge to the 30S subunit in the 70S ribosome.

Its function is as follows. This is one of the proteins that bind and probably mediate the attachment of the 5S RNA into the large ribosomal subunit, where it forms part of the central protuberance. In the 70S ribosome it contacts protein S13 of the 30S subunit (bridge B1b), connecting the 2 subunits; this bridge is implicated in subunit movement. May contact the P site tRNA; the 5S rRNA and some of its associated proteins might help stabilize positioning of ribosome-bound tRNAs. In Methanococcus maripaludis (strain C6 / ATCC BAA-1332), this protein is Large ribosomal subunit protein uL5.